The chain runs to 211 residues: uncharacterized protein (211 aa).

Disordered regions lie at residues 1–73 and 96–123; these read MLRR…SKLK and TNAAKEEKLRMAPSPTQSTRSESDASLS. 2 stretches are compositionally biased toward polar residues: residues 26-35 and 53-62; these read SKSSLISLTS and APSQFLSPTN. Residues 63 to 73 show a composition bias toward low complexity; sequence KRSTSSQSKLK. A Phosphoserine modification is found at Ser182. Position 184 is a phosphothreonine (Thr184). Ser186 carries the phosphoserine modification.

This is an uncharacterized protein from Saccharomyces cerevisiae (strain ATCC 204508 / S288c) (Baker's yeast).